The sequence spans 339 residues: UDP-galactose transporter homolog 1 (339 aa).

Helical transmembrane passes span 5–25 (ILKH…WGLL), 43–63 (VPYI…LIYI), 91–111 (AISA…TYML), 138–158 (LVVL…HKPS), 171–191 (SSLI…LTNA), 208–228 (HLMF…MVLV), 246–268 (ISRY…FYTL), 273–295 (SLVL…IIVY), and 301–321 (LWQW…SMGK).

Belongs to the nucleotide-sugar transporter family. SLC35B subfamily.

It is found in the endoplasmic reticulum membrane. In terms of biological role, may be involved in specific transport of UDP-Gal from the cytosol to the Golgi lumen. Involved in the maintenance of optimal conditions for the folding of secretory pathway proteins in the endoplasmic reticulum. This Kluyveromyces lactis (strain ATCC 8585 / CBS 2359 / DSM 70799 / NBRC 1267 / NRRL Y-1140 / WM37) (Yeast) protein is UDP-galactose transporter homolog 1 (HUT1).